The chain runs to 547 residues: Mercuric reductase (547 aa).

The HMA domain occupies 4-67 (NSYKIPIQGM…NISAAGYQPG (64 aa)). The a metal cation site is built by C15 and C18. FAD-binding residues include A97, G117, and T122. A disulfide bridge connects residues C123 and C128. Residues K132, A196, D388, and V396 each contribute to the FAD site. Hg(2+) contacts are provided by C544 and C545.

This sequence belongs to the class-I pyridine nucleotide-disulfide oxidoreductase family. Homodimer. The cofactor is FAD.

The enzyme catalyses Hg + NADP(+) + H(+) = Hg(2+) + NADPH. In terms of biological role, resistance to Hg(2+) in bacteria appears to be governed by a specialized system which includes mercuric reductase. MerA protein is responsible for volatilizing mercury as Hg(0). The protein is Mercuric reductase (merA) of Staphylococcus aureus.